Consider the following 473-residue polypeptide: Probable dipeptidase (473 aa).

The active site involves cysteine 10.

It belongs to the peptidase C69 family.

It catalyses the reaction an L-aminoacyl-L-amino acid + H2O = 2 an L-alpha-amino acid. In Latilactobacillus sakei (Lactobacillus sakei), this protein is Probable dipeptidase.